Reading from the N-terminus, the 267-residue chain is Multivesicular body subunit 12A (267 aa).

The MABP domain occupies 7–146; sequence AAPLSGVGWA…SFAIWCKKGA (140 aa). The SH3-binding motif lies at 154–159; it reads PVPKPR. Positions 210 to 259 constitute a UMA domain; that stretch reads MDGVPFTLHPKFERSPKSDSSAILTDLTVKSLADIEKEYNYTFVVERTAA.

Belongs to the MVB12 family. Component of the ESCRT-I complex (endosomal sorting complex required for transport I).

It is found in the cytoplasm. Its subcellular location is the endosome. The protein resides in the late endosome membrane. Functionally, component of the ESCRT-I complex, a regulator of vesicular trafficking process. Required for the sorting of endocytic ubiquitinated cargos into multivesicular bodies. The sequence is that of Multivesicular body subunit 12A (MVB12A) from Gallus gallus (Chicken).